The primary structure comprises 308 residues: Acetylglutamate kinase (308 aa).

Residues G64 to G65, R86, and N192 contribute to the substrate site.

It belongs to the acetylglutamate kinase family. ArgB subfamily.

Its subcellular location is the cytoplasm. It carries out the reaction N-acetyl-L-glutamate + ATP = N-acetyl-L-glutamyl 5-phosphate + ADP. Its pathway is amino-acid biosynthesis; L-arginine biosynthesis; N(2)-acetyl-L-ornithine from L-glutamate: step 2/4. Its function is as follows. Catalyzes the ATP-dependent phosphorylation of N-acetyl-L-glutamate. In Myxococcus xanthus (strain DK1622), this protein is Acetylglutamate kinase.